A 608-amino-acid polypeptide reads, in one-letter code: UvrABC system protein C (608 aa).

One can recognise a GIY-YIG domain in the interval 22-100 (EKPGIYQYLN…IKKYKPRYNV (79 aa)). A UVR domain is found at 214 to 249 (QEISRLLYQRMQDLAAEMKFEEAQKVKEKYALIENY).

Belongs to the UvrC family. As to quaternary structure, interacts with UvrB in an incision complex.

Its subcellular location is the cytoplasm. The UvrABC repair system catalyzes the recognition and processing of DNA lesions. UvrC both incises the 5' and 3' sides of the lesion. The N-terminal half is responsible for the 3' incision and the C-terminal half is responsible for the 5' incision. The chain is UvrABC system protein C from Bacteroides fragilis (strain ATCC 25285 / DSM 2151 / CCUG 4856 / JCM 11019 / LMG 10263 / NCTC 9343 / Onslow / VPI 2553 / EN-2).